Here is a 237-residue protein sequence, read N- to C-terminus: NAD(P)H-quinone oxidoreductase subunit K, chloroplastic (237 aa).

Positions 55, 56, 120, and 151 each coordinate [4Fe-4S] cluster.

This sequence belongs to the complex I 20 kDa subunit family. In terms of assembly, NDH is composed of at least 16 different subunits, 5 of which are encoded in the nucleus. It depends on [4Fe-4S] cluster as a cofactor.

Its subcellular location is the plastid. It localises to the chloroplast thylakoid membrane. The enzyme catalyses a plastoquinone + NADH + (n+1) H(+)(in) = a plastoquinol + NAD(+) + n H(+)(out). It catalyses the reaction a plastoquinone + NADPH + (n+1) H(+)(in) = a plastoquinol + NADP(+) + n H(+)(out). In terms of biological role, NDH shuttles electrons from NAD(P)H:plastoquinone, via FMN and iron-sulfur (Fe-S) centers, to quinones in the photosynthetic chain and possibly in a chloroplast respiratory chain. The immediate electron acceptor for the enzyme in this species is believed to be plastoquinone. Couples the redox reaction to proton translocation, and thus conserves the redox energy in a proton gradient. The polypeptide is NAD(P)H-quinone oxidoreductase subunit K, chloroplastic (Nephroselmis olivacea (Green alga)).